Reading from the N-terminus, the 410-residue chain is Transcription factor rglT (410 aa).

A disordered region spans residues 1–24; it reads MQFDSLPLPPSSSHDTTSVPPLKR. A DNA-binding region (zn(2)-C6 fungal-type) is located at residues 28–55; it reads CDECRKRKLKCSGEATGCSRCLKQSLPC. Positions 353 to 372 are disordered; that stretch reads HRTRTVESPNEPGSCSPVSH. Polar residues predominate over residues 358 to 369; it reads VESPNEPGSCSP.

It localises to the nucleus. In terms of biological role, transcription factor that is involved in protection against oxidative stress. Binds to promoter regions of the gliotoxin (GT) biosynthetic genes gliZ, gliF, gliT, gliM, gliA and gtmA. Two related but different DNA motifs (5'-TCGG-3' and 5'-CGGNCGG-3') are specifically enriched among rglT binding sites in GT-inducing conditions. Also indirectly regulates the expression of gliP, gliG, gliH and gliN. Plays a key role in resistance against exogenously-added GT and GT biosynthesis, mainly through the direct regulation of gliT. Furthermore, rglT is important for virulence in chemotherapeutic mice with invasive pulmonary aspergillosis (IPA). The sequence is that of Transcription factor rglT from Aspergillus fumigatus (strain CBS 144.89 / FGSC A1163 / CEA10) (Neosartorya fumigata).